The primary structure comprises 279 residues: Putative hydroxypyruvate isomerase (279 aa).

Catalysis depends on proton donor/acceptor residues Glu-155 and Glu-256. Residues 260–279 (GDDPSAQSFSWLPAGARAAR) are disordered.

The protein belongs to the hyi family.

It catalyses the reaction 3-hydroxypyruvate = 2-hydroxy-3-oxopropanoate. Its function is as follows. Catalyzes the reversible isomerization between hydroxypyruvate and 2-hydroxy-3-oxopropanoate (also termed tartronate semialdehyde). The sequence is that of Putative hydroxypyruvate isomerase from Streptomyces coelicolor (strain ATCC BAA-471 / A3(2) / M145).